Consider the following 184-residue polypeptide: Photosystem I assembly protein Ycf4 (184 aa).

2 helical membrane passes run Phe-22 to Ser-42 and Ile-57 to Ser-77.

The protein belongs to the Ycf4 family.

The protein resides in the plastid. Its subcellular location is the chloroplast thylakoid membrane. In terms of biological role, seems to be required for the assembly of the photosystem I complex. The sequence is that of Photosystem I assembly protein Ycf4 from Lepidium virginicum (Virginia pepperweed).